The sequence spans 484 residues: AMP nucleosidase (484 aa).

It belongs to the AMP nucleosidase family.

The enzyme catalyses AMP + H2O = adenine + D-ribose 5-phosphate. Its function is as follows. Catalyzes the hydrolysis of the N-glycosidic bond of AMP to form adenine and ribose 5-phosphate. Involved in regulation of AMP concentrations. This chain is AMP nucleosidase, found in Escherichia coli O157:H7.